A 209-amino-acid polypeptide reads, in one-letter code: MLGKGRPLVVRGRTVEQVWRQAVTGIKVHGEKVERERGPVKEVRGLIAHLEPSGPESFDIPDDYPLDEHSVRAYEDQLLDPELRGFEYTYGHRLRRYFGLDQVTKIVERLSESNNTRRAIAVTWDPRRDLDEEEVPCLTALQLQSDGGSGLELHAFYRSWDVGKALVANMIALRRLQEHVAERAGLEPTTLTVYAANAHVYEEDLPDLP.

Residue Cys137 is part of the active site.

It belongs to the thymidylate synthase family. Archaeal-type ThyA subfamily. Monomer.

The protein resides in the cytoplasm. The protein operates within pyrimidine metabolism; dTTP biosynthesis. May catalyze the biosynthesis of dTMP using an unknown cosubstrate. This is Putative thymidylate synthase from Methanopyrus kandleri (strain AV19 / DSM 6324 / JCM 9639 / NBRC 100938).